A 231-amino-acid polypeptide reads, in one-letter code: Elongation factor 1-delta 2 (231 aa).

The residue at position 2 (Ala2) is an N-acetylalanine. A GST C-terminal domain is found at Ser11–Gly73. The segment at Ser82 to Lys136 is disordered. The segment covering Ala102–Glu118 has biased composition (acidic residues). The span at Glu119–Ala129 shows a compositional bias: basic and acidic residues.

It belongs to the EF-1-beta/EF-1-delta family. In terms of assembly, EF-1 is composed of 4 subunits: alpha, beta (1B-alpha=beta'), delta (1B-beta), and gamma (1B-gamma).

Its function is as follows. EF-1-beta and EF-1-delta stimulate the exchange of GDP bound to EF-1-alpha to GTP. The polypeptide is Elongation factor 1-delta 2 (Arabidopsis thaliana (Mouse-ear cress)).